A 414-amino-acid polypeptide reads, in one-letter code: Tyrosine--tRNA ligase (414 aa).

Tyr38 serves as a coordination point for L-tyrosine. The 'HIGH' region motif lies at 43–52; sequence CTARSLHIGS. Residues Tyr172 and Gln176 each contribute to the L-tyrosine site. The 'KMSKS' region signature appears at 232–236; sequence KMGKT. Residue Lys235 coordinates ATP. One can recognise an S4 RNA-binding domain in the interval 345–412; sequence ISVAKLLQLA…GKKRRIKVVV (68 aa).

It belongs to the class-I aminoacyl-tRNA synthetase family. TyrS type 1 subfamily. As to quaternary structure, homodimer.

Its subcellular location is the cytoplasm. It catalyses the reaction tRNA(Tyr) + L-tyrosine + ATP = L-tyrosyl-tRNA(Tyr) + AMP + diphosphate + H(+). Functionally, catalyzes the attachment of tyrosine to tRNA(Tyr) in a two-step reaction: tyrosine is first activated by ATP to form Tyr-AMP and then transferred to the acceptor end of tRNA(Tyr). The chain is Tyrosine--tRNA ligase from Anaplasma marginale (strain St. Maries).